The primary structure comprises 164 residues: UPF0304 protein YPDSF_1971 (164 aa).

The protein belongs to the UPF0304 family.

This is UPF0304 protein YPDSF_1971 from Yersinia pestis (strain Pestoides F).